A 343-amino-acid polypeptide reads, in one-letter code: Protein RecA (343 aa).

Residue 66-73 (GPESSGKT) participates in ATP binding.

Belongs to the RecA family.

The protein resides in the cytoplasm. Its function is as follows. Can catalyze the hydrolysis of ATP in the presence of single-stranded DNA, the ATP-dependent uptake of single-stranded DNA by duplex DNA, and the ATP-dependent hybridization of homologous single-stranded DNAs. It interacts with LexA causing its activation and leading to its autocatalytic cleavage. The sequence is that of Protein RecA from Rickettsia bellii (strain OSU 85-389).